Consider the following 396-residue polypeptide: Probable sugar efflux transporter (396 aa).

The next 12 helical transmembrane spans lie at 15–35 (VLIMACAGFIFNTTEFVPVAM), 51–71 (GLMMTVYAWTVLIMSLPAMLA), 84–104 (LFIIFIVGHILSVIAWNFWIL), 109–129 (MCIALAHSVFWSITASLVMRI), 137–157 (QALGMLAIGTALATILGLPIG), 168–188 (VTFGIIAVLALSIMFLIIRLL), 209–229 (PLLLWLYVTTAIVISAHFTAY), 245–265 (NFATAVLLVFGFSGIAASLLF), 273–293 (PTKFIVVSMSLLMFSLLLLLF), 297–317 (TIIAMFSLVFIWGIGISCIGL), 333–353 (VATAIYSGIFNAGIGAGALFG), and 365–385 (IGYTGAALGLIGFIIFITTHL).

This sequence belongs to the major facilitator superfamily. SotB (TC 2.A.1.2) family.

Its subcellular location is the cell inner membrane. Involved in the efflux of sugars. The physiological role may be the reduction of the intracellular concentration of toxic sugars or sugar metabolites. The polypeptide is Probable sugar efflux transporter (Haemophilus influenzae (strain ATCC 51907 / DSM 11121 / KW20 / Rd)).